The primary structure comprises 122 residues: Large ribosomal subunit protein uL14c (122 aa).

Belongs to the universal ribosomal protein uL14 family. In terms of assembly, part of the 50S ribosomal subunit.

The protein localises to the plastid. The protein resides in the chloroplast. Functionally, binds to 23S rRNA. The protein is Large ribosomal subunit protein uL14c of Lactuca sativa (Garden lettuce).